Consider the following 268-residue polypeptide: Non-homologous end joining protein Ku (268 aa).

Residues Val-13 to Asn-175 enclose the Ku domain. A disordered region spans residues Arg-174–Ser-194.

The protein belongs to the prokaryotic Ku family. In terms of assembly, homodimer. Interacts with LigD.

Functionally, with LigD forms a non-homologous end joining (NHEJ) DNA repair enzyme, which repairs dsDNA breaks with reduced fidelity. Binds linear dsDNA with 5'- and 3'- overhangs but not closed circular dsDNA nor ssDNA. Recruits and stimulates the ligase activity of LigD. The polypeptide is Non-homologous end joining protein Ku (Gluconacetobacter diazotrophicus (strain ATCC 49037 / DSM 5601 / CCUG 37298 / CIP 103539 / LMG 7603 / PAl5)).